Consider the following 401-residue polypeptide: Adenylosuccinate synthetase (401 aa).

GTP-binding positions include 11 to 17 (GDEGKGK) and 39 to 41 (GHT). Aspartate 12 (proton acceptor) is an active-site residue. Mg(2+) contacts are provided by aspartate 12 and glycine 39. IMP contacts are provided by residues 12-15 (DEGK), 37-40 (NAGH), threonine 127, arginine 141, glutamine 212, threonine 227, and arginine 290. Catalysis depends on histidine 40, which acts as the Proton donor. Substrate is bound at residue 286–292 (ATTGRPR). Residues arginine 292, 318–320 (KGD), and 390–392 (SVG) contribute to the GTP site.

This sequence belongs to the adenylosuccinate synthetase family. As to quaternary structure, homodimer. The cofactor is Mg(2+).

The protein localises to the cytoplasm. It catalyses the reaction IMP + L-aspartate + GTP = N(6)-(1,2-dicarboxyethyl)-AMP + GDP + phosphate + 2 H(+). The protein operates within purine metabolism; AMP biosynthesis via de novo pathway; AMP from IMP: step 1/2. Its function is as follows. Plays an important role in the de novo pathway of purine nucleotide biosynthesis. Catalyzes the first committed step in the biosynthesis of AMP from IMP. The chain is Adenylosuccinate synthetase from Thermosipho africanus (strain TCF52B).